A 235-amino-acid chain; its full sequence is MTLNVNVLTIFPEMFPGPLSYSVIGRALNKGIWNLNVIDIRSFAKDKHKTVDDKPYGGGPGMIMKADVIGSAIDEVLSKNKNTKLIYMSPSGVKLNQDISGQLTHFSNITVLCGRFEGIDKRILDFYDFHEISIGDYILSGGEVACMVLIEACVRLIPGVVNNTQSICDESFTLNNQLEYPQYTRPAKWRGLEVPDILLSGNHKKINLWKANQSYCITKQRRPELTDTINGDIYE.

S-adenosyl-L-methionine-binding positions include Gly114 and 134–139 (IGDYIL).

Belongs to the RNA methyltransferase TrmD family. As to quaternary structure, homodimer.

Its subcellular location is the cytoplasm. The enzyme catalyses guanosine(37) in tRNA + S-adenosyl-L-methionine = N(1)-methylguanosine(37) in tRNA + S-adenosyl-L-homocysteine + H(+). Specifically methylates guanosine-37 in various tRNAs. The polypeptide is tRNA (guanine-N(1)-)-methyltransferase (Ehrlichia canis (strain Jake)).